The sequence spans 456 residues: GTPase Der (456 aa).

2 consecutive EngA-type G domains span residues 2–167 (LKVA…DQFG) and 176–351 (ATFC…AQLK). GTP contacts are provided by residues 8–15 (GKPNVGKS), 55–59 (DTGGL), 118–121 (NKIE), 182–189 (GKPNVGKS), 229–233 (DTAGI), and 294–297 (NKWD). The 85-residue stretch at 352–436 (IKISTSLLND…PITLYFKSKN (85 aa)) folds into the KH-like domain.

Belongs to the TRAFAC class TrmE-Era-EngA-EngB-Septin-like GTPase superfamily. EngA (Der) GTPase family. Associates with the 50S ribosomal subunit.

In terms of biological role, GTPase that plays an essential role in the late steps of ribosome biogenesis. The polypeptide is GTPase Der (Mycoplasmoides gallisepticum (strain R(low / passage 15 / clone 2)) (Mycoplasma gallisepticum)).